The following is a 77-amino-acid chain: Exodeoxyribonuclease 7 small subunit (77 aa).

This sequence belongs to the XseB family. In terms of assembly, heterooligomer composed of large and small subunits.

The protein localises to the cytoplasm. The catalysed reaction is Exonucleolytic cleavage in either 5'- to 3'- or 3'- to 5'-direction to yield nucleoside 5'-phosphates.. Its function is as follows. Bidirectionally degrades single-stranded DNA into large acid-insoluble oligonucleotides, which are then degraded further into small acid-soluble oligonucleotides. The polypeptide is Exodeoxyribonuclease 7 small subunit (Alkaliphilus oremlandii (strain OhILAs) (Clostridium oremlandii (strain OhILAs))).